Consider the following 567-residue polypeptide: Methionine--tRNA ligase (567 aa).

A 'HIGH' region motif is present at residues 11–21 (PYVQTVPHLGN). 4 residues coordinate Zn(2+): C143, C146, C156, and C159. The 'KMSKS' region signature appears at 331 to 335 (KFSKS). K334 is a binding site for ATP.

This sequence belongs to the class-I aminoacyl-tRNA synthetase family. MetG type 1 subfamily. Zn(2+) is required as a cofactor.

The protein localises to the cytoplasm. It catalyses the reaction tRNA(Met) + L-methionine + ATP = L-methionyl-tRNA(Met) + AMP + diphosphate. Is required not only for elongation of protein synthesis but also for the initiation of all mRNA translation through initiator tRNA(fMet) aminoacylation. In Pyrobaculum islandicum (strain DSM 4184 / JCM 9189 / GEO3), this protein is Methionine--tRNA ligase.